The primary structure comprises 519 residues: Alternative NAD(P)H-ubiquinone oxidoreductase C1, chloroplastic/mitochondrial (519 aa).

A chloroplast and mitochondrion-targeting transit peptide spans 1 to 52 (MAVLSSVSSLIPFSYGATRLTSKASLASRTSGFNLSSRWNSTRNSPMLYLSR). 82–118 (RVCILGGGFGGLYTALRLESLVWPEDKKPQVVLVDQS) serves as a coordination point for FAD. NAD(+) is bound at residue 246–282 (IKVAVVGCGYAGVELAATISERLQDRGIVQSINVSKN).

Belongs to the NADH dehydrogenase family. FAD serves as cofactor. In terms of tissue distribution, flowers, roots, leaves and stems.

The protein localises to the mitochondrion. It localises to the mitochondrion inner membrane. Its subcellular location is the plastid. It is found in the chloroplast. The protein resides in the plastoglobule. The enzyme catalyses a quinone + NADH + H(+) = a quinol + NAD(+). It carries out the reaction a ubiquinone + NADH + H(+) = a ubiquinol + NAD(+). It catalyses the reaction demethylphylloquinone + NADPH + H(+) = demethylphylloquinol + NADP(+). With respect to regulation, inhibited by dicumarol. In terms of biological role, bifunctional oxidoreductase ables to act both on prenyl naphthoquinones and on prenyl benzoquinones. May serve a respiratory function. Involved in an electron flow toward the plastoglobule plastoquinone pool. Required for plastochromanol-8 accumulation and for phylloquinone (vitamin K1) production. Probably not directly involved in cyclic or chlororespiratory electron flows under standard growth conditions, but participates in the redox metabolism of plastoquinone-9 and the tocophrol recycling-intermediate alpha-tocopherol quinone. Catalyzes the penultimate step in the biosynthesis of vitamin K1. The chain is Alternative NAD(P)H-ubiquinone oxidoreductase C1, chloroplastic/mitochondrial from Arabidopsis thaliana (Mouse-ear cress).